We begin with the raw amino-acid sequence, 2443 residues long: Spatacsin (2443 aa).

The residue at position 1955 (S1955) is a Phosphoserine.

As to quaternary structure, interacts with AP5Z1, AP5B1, AP5S1 and ZFYVE26. As to expression, expressed in all structures of brain, with a high expression in cerebellum. Expressed in cortical projection neurons.

The protein localises to the cytoplasm. Its subcellular location is the cytosol. It localises to the nucleus. It is found in the cell projection. The protein resides in the axon. The protein localises to the dendrite. In terms of biological role, may play a role in neurite plasticity by maintaining cytoskeleton stability and regulating synaptic vesicle transport. This chain is Spatacsin (SPG11), found in Homo sapiens (Human).